Consider the following 181-residue polypeptide: Acireductone dioxygenase (181 aa).

Positions 97, 99, 103, and 141 each coordinate Fe(2+). Residues H97, H99, E103, and H141 each contribute to the Ni(2+) site.

It belongs to the acireductone dioxygenase (ARD) family. In terms of assembly, monomer. Fe(2+) is required as a cofactor. Ni(2+) serves as cofactor.

The catalysed reaction is 1,2-dihydroxy-5-(methylsulfanyl)pent-1-en-3-one + O2 = 3-(methylsulfanyl)propanoate + CO + formate + 2 H(+). It carries out the reaction 1,2-dihydroxy-5-(methylsulfanyl)pent-1-en-3-one + O2 = 4-methylsulfanyl-2-oxobutanoate + formate + 2 H(+). It functions in the pathway amino-acid biosynthesis; L-methionine biosynthesis via salvage pathway; L-methionine from S-methyl-5-thio-alpha-D-ribose 1-phosphate: step 5/6. Catalyzes 2 different reactions between oxygen and the acireductone 1,2-dihydroxy-3-keto-5-methylthiopentene (DHK-MTPene) depending upon the metal bound in the active site. Fe-containing acireductone dioxygenase (Fe-ARD) produces formate and 2-keto-4-methylthiobutyrate (KMTB), the alpha-ketoacid precursor of methionine in the methionine recycle pathway. Ni-containing acireductone dioxygenase (Ni-ARD) produces methylthiopropionate, carbon monoxide and formate, and does not lie on the methionine recycle pathway. In Pseudomonas savastanoi pv. phaseolicola (strain 1448A / Race 6) (Pseudomonas syringae pv. phaseolicola (strain 1448A / Race 6)), this protein is Acireductone dioxygenase.